Here is a 220-residue protein sequence, read N- to C-terminus: Claudin-22 (220 aa).

Residues 1–10 lie on the Cytoplasmic side of the membrane; the sequence is MALVFRTVAQ. The chain crosses the membrane as a helical span at residues 11 to 30; the sequence is LAGVSLSLLGWVLSCLTNYL. At 31-81 the chain is on the extracellular side; it reads PHWKNLNLDLNEMENWTMGLWQTCVIQEEVGMQCKDFDSFLALPAELRVSR. The chain crosses the membrane as a helical span at residues 82 to 102; sequence ILMFLSNGLGFLGLLVSGFGL. At 103–117 the chain is on the cytoplasmic side; the sequence is DCLRIGESQRDLKRR. Residues 118–138 traverse the membrane as a helical segment; that stretch reads LLILGGILSWASGVTALVPVS. Residues 139–164 lie on the Extracellular side of the membrane; sequence WVAHKTVQEFWDENVPDFVPRWEFGE. Residues 165 to 185 traverse the membrane as a helical segment; it reads ALFLGWFAGLSLLLGGCLLHC. The Cytoplasmic segment spans residues 186–220; sequence AACSSHAPLASGHYAVAQTQDHHQELETRNTNLKH.

Belongs to the claudin family.

The protein resides in the cell junction. It is found in the tight junction. The protein localises to the cell membrane. Its function is as follows. Plays a major role in tight junction-specific obliteration of the intercellular space, through calcium-independent cell-adhesion activity. The protein is Claudin-22 (CLDN22) of Homo sapiens (Human).